Consider the following 135-residue polypeptide: Large-conductance mechanosensitive channel (135 aa).

2 helical membrane passes run 10 to 30 (FAMRGNVVDLAVGVIIGAAFG) and 76 to 96 (GVFIQNVFDFVIVAFAIFLAI).

This sequence belongs to the MscL family. As to quaternary structure, homopentamer.

Its subcellular location is the cell inner membrane. Functionally, channel that opens in response to stretch forces in the membrane lipid bilayer. May participate in the regulation of osmotic pressure changes within the cell. The protein is Large-conductance mechanosensitive channel of Cronobacter sakazakii (strain ATCC BAA-894) (Enterobacter sakazakii).